The primary structure comprises 271 residues: Mannosyl-3-phosphoglycerate phosphatase (271 aa).

The Nucleophile role is filled by Asp13. The Mg(2+) site is built by Asp13, Asp15, and Asp214.

It belongs to the HAD-like hydrolase superfamily. MPGP family. Mg(2+) serves as cofactor.

It localises to the cytoplasm. It carries out the reaction 2-O-(alpha-D-mannosyl)-3-phosphoglycerate + H2O = (2R)-2-O-(alpha-D-mannosyl)-glycerate + phosphate. The sequence is that of Mannosyl-3-phosphoglycerate phosphatase from Escherichia coli O127:H6 (strain E2348/69 / EPEC).